The sequence spans 218 residues: ATP phosphoribosyltransferase (218 aa).

It belongs to the ATP phosphoribosyltransferase family. Short subfamily. In terms of assembly, heteromultimer composed of HisG and HisZ subunits.

Its subcellular location is the cytoplasm. It catalyses the reaction 1-(5-phospho-beta-D-ribosyl)-ATP + diphosphate = 5-phospho-alpha-D-ribose 1-diphosphate + ATP. The protein operates within amino-acid biosynthesis; L-histidine biosynthesis; L-histidine from 5-phospho-alpha-D-ribose 1-diphosphate: step 1/9. Its function is as follows. Catalyzes the condensation of ATP and 5-phosphoribose 1-diphosphate to form N'-(5'-phosphoribosyl)-ATP (PR-ATP). Has a crucial role in the pathway because the rate of histidine biosynthesis seems to be controlled primarily by regulation of HisG enzymatic activity. This Deinococcus radiodurans (strain ATCC 13939 / DSM 20539 / JCM 16871 / CCUG 27074 / LMG 4051 / NBRC 15346 / NCIMB 9279 / VKM B-1422 / R1) protein is ATP phosphoribosyltransferase (hisG).